Here is a 111-residue protein sequence, read N- to C-terminus: Small ribosomal subunit protein bS16 (111 aa).

This sequence belongs to the bacterial ribosomal protein bS16 family.

The chain is Small ribosomal subunit protein bS16 from Rickettsia africae (strain ESF-5).